The primary structure comprises 101 residues: Small ribosomal subunit protein uS14 (101 aa).

Residues 50–70 (SLPRDSSPSRQRKRCRQTGRP) form a disordered region. Residues 59–68 (RQRKRCRQTG) are compositionally biased toward basic residues.

This sequence belongs to the universal ribosomal protein uS14 family. As to quaternary structure, part of the 30S ribosomal subunit. Contacts proteins S3 and S10.

In terms of biological role, binds 16S rRNA, required for the assembly of 30S particles and may also be responsible for determining the conformation of the 16S rRNA at the A site. This chain is Small ribosomal subunit protein uS14, found in Erwinia tasmaniensis (strain DSM 17950 / CFBP 7177 / CIP 109463 / NCPPB 4357 / Et1/99).